A 299-amino-acid polypeptide reads, in one-letter code: Taste receptor type 2 member 4 (299 aa).

The Extracellular segment spans residues 1–9; it reads MLRLFYFSA. The helical transmembrane segment at 10 to 30 threads the bilayer; sequence VIASVILNFVGIIMNLFITVV. Residues 31 to 46 are Cytoplasmic-facing; sequence NCKTWVKSHRISSSDR. A helical membrane pass occupies residues 47–67; sequence ILFSLGITRFLMLGLFLVNTI. Residues 68–81 are Extracellular-facing; it reads YFVSSNMERSVYLS. A helical transmembrane segment spans residues 82-102; that stretch reads AFFVLCFMFLDSSSLWFVTLL. Residues 103–131 lie on the Cytoplasmic side of the membrane; that stretch reads NILYCVKITNFQHSVFLLLKRSISPKIPR. A helical membrane pass occupies residues 132-152; the sequence is LLLAFVLISAFTTCLYITLSQ. Topologically, residues 153–172 are extracellular; sequence ASPFPELVTTRNNTSFNISE. Asparagine 164, asparagine 165, and asparagine 169 each carry an N-linked (GlcNAc...) asparagine glycan. The chain crosses the membrane as a helical span at residues 173 to 193; the sequence is GILSLVVSLVLSSSLQFIINV. Residues 194–230 are Cytoplasmic-facing; the sequence is TSASLLIHSLRRHIQKMQKNATGFWNPQMEAHVGAMK. Residues 231–251 traverse the membrane as a helical segment; sequence LMVYFLILYIPYSVATLVQYL. At 252 to 262 the chain is on the extracellular side; it reads PFYAGMDMGTK. A helical transmembrane segment spans residues 263–283; that stretch reads SICLIFATLYSPGHSVLIIIT. At 284 to 299 the chain is on the cytoplasmic side; the sequence is HPKLKTTAKKILCFKK.

This sequence belongs to the G-protein coupled receptor T2R family.

It is found in the membrane. It localises to the cell projection. Its subcellular location is the cilium membrane. Gustducin-coupled receptor implicated in the perception of bitter compounds in the oral cavity and the gastrointestinal tract. Signals through PLCB2 and the calcium-regulated cation channel TRPM5. In airway epithelial cells, binding of denatonium increases the intracellular calcium ion concentration and stimulates ciliary beat frequency. In Gorilla gorilla gorilla (Western lowland gorilla), this protein is Taste receptor type 2 member 4 (TAS2R4).